Reading from the N-terminus, the 382-residue chain is Lactosylceramide 1,3-N-acetyl-beta-D-glucosaminyltransferase B (382 aa).

Residues 1–13 (MAVLKMPRFKKYH) lie on the Cytoplasmic side of the membrane. A helical; Signal-anchor for type II membrane protein membrane pass occupies residues 14–30 (LRLMITCFSTLLLMTYW). Topologically, residues 31–382 (EKIDNCVVTH…CKAAFFEEDT (352 aa)) are lumenal. 4 N-linked (GlcNAc...) asparagine glycosylation sites follow: N57, N112, N167, and N276.

The protein belongs to the glycosyltransferase 31 family.

It localises to the golgi apparatus membrane. It carries out the reaction a beta-D-Gal-(1-&gt;4)-beta-D-Glc-(1&lt;-&gt;1)-Cer(d18:1(4E)) + UDP-N-acetyl-alpha-D-glucosamine = a beta-D-GlcNAc-(1-&gt;3)-beta-D-Gal-(1-&gt;4)-beta-D-Glc-(1&lt;-&gt;1)-Cer(d18:1(4E)) + UDP + H(+). The catalysed reaction is a neolactoside nLc4Cer(d18:1(4E)) + UDP-N-acetyl-alpha-D-glucosamine = a neolactoside IV(3)-beta-GlcNAc-nLc4Cer(d18:1(4E)) + UDP + H(+). It participates in protein modification; protein glycosylation. In terms of biological role, beta-1,3-N-acetylglucosaminyltransferase that plays a key role in the synthesis of lacto- or neolacto-series carbohydrate chains on glycolipids. The polypeptide is Lactosylceramide 1,3-N-acetyl-beta-D-glucosaminyltransferase B (b3gnt5b) (Danio rerio (Zebrafish)).